A 129-amino-acid chain; its full sequence is 3-aminoacrylate deaminase RutC (129 aa).

It belongs to the RutC family.

It catalyses the reaction (Z)-3-aminoacrylate + H2O + H(+) = 3-oxopropanoate + NH4(+). In terms of biological role, involved in pyrimidine catabolism. Catalyzes the deamination of 3-aminoacrylate to malonic semialdehyde, a reaction that can also occur spontaneously. RutC may facilitate the reaction and modulate the metabolic fitness, rather than catalyzing essential functions. The polypeptide is 3-aminoacrylate deaminase RutC (Yersinia enterocolitica serotype O:8 / biotype 1B (strain NCTC 13174 / 8081)).